Reading from the N-terminus, the 532-residue chain is Phosphoenolpyruvate carboxykinase (ATP) (532 aa).

3 residues coordinate substrate: Arg60, Tyr194, and Lys200. ATP contacts are provided by residues Lys200, His219, and 237-245 (GLSGTGKTT). Residues Lys200 and His219 each contribute to the Mn(2+) site. Asp258 serves as a coordination point for Mn(2+). Glu286, Arg324, and Thr449 together coordinate ATP. Arg324 lines the substrate pocket.

It belongs to the phosphoenolpyruvate carboxykinase (ATP) family. It depends on Mn(2+) as a cofactor.

The protein resides in the cytoplasm. The catalysed reaction is oxaloacetate + ATP = phosphoenolpyruvate + ADP + CO2. It participates in carbohydrate biosynthesis; gluconeogenesis. Its function is as follows. Involved in the gluconeogenesis. Catalyzes the conversion of oxaloacetate (OAA) to phosphoenolpyruvate (PEP) through direct phosphoryl transfer between the nucleoside triphosphate and OAA. The sequence is that of Phosphoenolpyruvate carboxykinase (ATP) from Roseobacter denitrificans (strain ATCC 33942 / OCh 114) (Erythrobacter sp. (strain OCh 114)).